The sequence spans 445 residues: Phosphoglucosamine mutase (445 aa).

S99 serves as the catalytic Phosphoserine intermediate. S99, D242, D244, and D246 together coordinate Mg(2+). The residue at position 99 (S99) is a Phosphoserine.

It belongs to the phosphohexose mutase family. The cofactor is Mg(2+). Post-translationally, activated by phosphorylation.

It carries out the reaction alpha-D-glucosamine 1-phosphate = D-glucosamine 6-phosphate. Catalyzes the conversion of glucosamine-6-phosphate to glucosamine-1-phosphate. The chain is Phosphoglucosamine mutase from Campylobacter jejuni (strain RM1221).